The primary structure comprises 173 residues: MNPRRKSRFKLVIFVVLGIAIASGLMLYALRQNIDLFYTPSEVIQGKDNNPNQKPEVGQRIRVGGMVVEGTVVRDPKSLKVRFDLNDIGPAITVEYEGILPDLFREGQGIVAQGVLTQSAVLSATEVLAKHDENYVPPELGEKMQKVHKPMGIKAADLKGESARDRQEKEGAK.

Residues 1–8 (MNPRRKSR) lie on the Cytoplasmic side of the membrane. The chain crosses the membrane as a helical; Signal-anchor for type II membrane protein span at residues 9 to 29 (FKLVIFVVLGIAIASGLMLYA). Residues 30 to 173 (LRQNIDLFYT…RDRQEKEGAK (144 aa)) are Periplasmic-facing. Heme contacts are provided by His-131 and Tyr-135. The interval 152–173 (GIKAADLKGESARDRQEKEGAK) is disordered. Residues 156–173 (ADLKGESARDRQEKEGAK) are compositionally biased toward basic and acidic residues.

This sequence belongs to the CcmE/CycJ family.

It localises to the cell inner membrane. Heme chaperone required for the biogenesis of c-type cytochromes. Transiently binds heme delivered by CcmC and transfers the heme to apo-cytochromes in a process facilitated by CcmF and CcmH. The polypeptide is Cytochrome c-type biogenesis protein CcmE (Haemophilus influenzae (strain PittEE)).